The sequence spans 328 residues: DNA-directed RNA polymerase subunit alpha (328 aa).

Residues 1–230 (MIQITGRKFK…IILDHFMFIE (230 aa)) are alpha N-terminal domain (alpha-NTD). Positions 257-328 (PEDVMSKKVE…FGLSLRKGDK (72 aa)) are alpha C-terminal domain (alpha-CTD).

It belongs to the RNA polymerase alpha chain family. In terms of assembly, homodimer. The RNAP catalytic core consists of 2 alpha, 1 beta, 1 beta' and 1 omega subunit. When a sigma factor is associated with the core the holoenzyme is formed, which can initiate transcription.

It catalyses the reaction RNA(n) + a ribonucleoside 5'-triphosphate = RNA(n+1) + diphosphate. Functionally, DNA-dependent RNA polymerase catalyzes the transcription of DNA into RNA using the four ribonucleoside triphosphates as substrates. In Fervidobacterium nodosum (strain ATCC 35602 / DSM 5306 / Rt17-B1), this protein is DNA-directed RNA polymerase subunit alpha.